The sequence spans 311 residues: Ferrochelatase (311 aa).

Fe cation is bound by residues H179 and E260.

The protein belongs to the ferrochelatase family.

The protein localises to the cytoplasm. It carries out the reaction heme b + 2 H(+) = protoporphyrin IX + Fe(2+). It participates in porphyrin-containing compound metabolism; protoheme biosynthesis; protoheme from protoporphyrin-IX: step 1/1. In terms of biological role, catalyzes the ferrous insertion into protoporphyrin IX. The protein is Ferrochelatase of Helicobacter hepaticus (strain ATCC 51449 / 3B1).